The primary structure comprises 355 residues: MALRLLKLGATSASARVVAAGAQRVRGIHSSGQCKLPYGMWHFLLGDKASKRLTERSRVITVDGNICTGKGKLAKEIAEKLGFKHFPEAGIHYPDSTTGDGKPLAADYNGNCSLEKFYDDPRSNDGNSYRLQSWLYSSRLLQYSDALEHLLTTGQGVVLERSIFSDFVFLDAMYNQGFIRKQCVDHYNEVKSVTICDYLPPHLVIYIDVPVPEVQRRIQKKGDPHEMKITSAYLQDIENAYKKTFLPEMSEKCEVLQYSAREAQDSKKVVEDIEYLKFDKGPWLKQDNRTLYHLRLLVQDKFEVLNYTSIPIFLPEVTIGAHQTDRVLHQFRELPGRKYSPGYNTEVGDKWIWLK.

The N-terminal 35 residues, 1–35, are a transit peptide targeting the mitochondrion; sequence MALRLLKLGATSASARVVAAGAQRVRGIHSSGQCK. The residue at position 250 (Ser-250) is a Phosphoserine; by PINK1. At Lys-285 the chain carries N6-succinyllysine.

Belongs to the complex I NDUFA10 subunit family. As to quaternary structure, complex I is composed of 45 different subunits. This a component of the hydrophobic protein fraction. Requires FAD as cofactor. Phosphorylation at Ser-250 by PINK1 is required for the binding and/or reduction of the complex I substrate ubiquinone.

The protein resides in the mitochondrion matrix. In terms of biological role, accessory subunit of the mitochondrial membrane respiratory chain NADH dehydrogenase (Complex I), that is believed not to be involved in catalysis. Complex I functions in the transfer of electrons from NADH to the respiratory chain. The immediate electron acceptor for the enzyme is believed to be ubiquinone. This chain is NADH dehydrogenase [ubiquinone] 1 alpha subcomplex subunit 10, mitochondrial (NDUFA10), found in Gorilla gorilla gorilla (Western lowland gorilla).